We begin with the raw amino-acid sequence, 543 residues long: Cytochrome P450 1B1 (543 aa).

Cys-470 contacts heme.

Belongs to the cytochrome P450 family. Heme is required as a cofactor. Constitutively expressed in retinal and kidney pericytes cells. Expressed in retinal endothelial cells (at protein level). Expressed in cardiac, pulmonary and aortic endothelial cells. Constitutively expressed in trabecular meshwork of the eye (at protein level).

The protein resides in the endoplasmic reticulum membrane. It is found in the microsome membrane. Its subcellular location is the mitochondrion. It catalyses the reaction an organic molecule + reduced [NADPH--hemoprotein reductase] + O2 = an alcohol + oxidized [NADPH--hemoprotein reductase] + H2O + H(+). The catalysed reaction is 17beta-estradiol + reduced [NADPH--hemoprotein reductase] + O2 = 2-hydroxy-17beta-estradiol + oxidized [NADPH--hemoprotein reductase] + H2O + H(+). It carries out the reaction 17beta-estradiol + reduced [NADPH--hemoprotein reductase] + O2 = 4-hydroxy-17beta-estradiol + oxidized [NADPH--hemoprotein reductase] + H2O + H(+). The enzyme catalyses estrone + reduced [NADPH--hemoprotein reductase] + O2 = 2-hydroxyestrone + oxidized [NADPH--hemoprotein reductase] + H2O + H(+). It catalyses the reaction estrone + reduced [NADPH--hemoprotein reductase] + O2 = 4-hydroxyestrone + oxidized [NADPH--hemoprotein reductase] + H2O + H(+). The catalysed reaction is testosterone + reduced [NADPH--hemoprotein reductase] + O2 = 6beta,17beta-dihydroxyandrost-4-en-3-one + oxidized [NADPH--hemoprotein reductase] + H2O + H(+). It carries out the reaction progesterone + reduced [NADPH--hemoprotein reductase] + O2 = 6beta-hydroxyprogesterone + oxidized [NADPH--hemoprotein reductase] + H2O + H(+). The enzyme catalyses progesterone + reduced [NADPH--hemoprotein reductase] + O2 = 16alpha-hydroxyprogesterone + oxidized [NADPH--hemoprotein reductase] + H2O + H(+). It catalyses the reaction all-trans-retinol + reduced [NADPH--hemoprotein reductase] + O2 = all-trans-retinal + oxidized [NADPH--hemoprotein reductase] + 2 H2O + H(+). The catalysed reaction is all-trans-retinal + reduced [NADPH--hemoprotein reductase] + O2 = all-trans-retinoate + oxidized [NADPH--hemoprotein reductase] + H2O + 2 H(+). It carries out the reaction (5Z,8Z,11Z,14Z)-eicosatetraenoate + reduced [NADPH--hemoprotein reductase] + O2 = (8R,9S)-epoxy-(5Z,11Z,14Z)-eicosatrienoate + oxidized [NADPH--hemoprotein reductase] + H2O + H(+). The enzyme catalyses (5Z,8Z,11Z,14Z)-eicosatetraenoate + reduced [NADPH--hemoprotein reductase] + O2 = (11R,12S)-epoxy-(5Z,8Z,14Z)-eicosatrienoate + oxidized [NADPH--hemoprotein reductase] + H2O + H(+). It catalyses the reaction (5Z,8Z,11Z,14Z)-eicosatetraenoate + reduced [NADPH--hemoprotein reductase] + O2 = (11S,12R)-epoxy-(5Z,8Z,14Z)-eicosatrienoate + oxidized [NADPH--hemoprotein reductase] + H2O + H(+). The catalysed reaction is (5Z,8Z,11Z,14Z)-eicosatetraenoate + reduced [NADPH--hemoprotein reductase] + O2 = (14R,15S)-epoxy-(5Z,8Z,11Z)-eicosatrienoate + oxidized [NADPH--hemoprotein reductase] + H2O + H(+). It carries out the reaction (5S)-hydroperoxy-(6E,8Z,11Z,14Z)-eicosatetraenoate = 5-oxo-(6E,8Z,11Z,14Z)-eicosatetraenoate + H2O. The enzyme catalyses (12S)-hydroperoxy-(5Z,8Z,10E,14Z)-eicosatetraenoate = 12-oxo-(5Z,8Z,10E,14Z)-eicosatetraenoate + H2O. It catalyses the reaction (13S)-hydroperoxy-(9Z,11E)-octadecadienoate = 13-oxo-(9Z,11E)-octadecadienoate + H2O. The catalysed reaction is (15S)-hydroperoxy-(5Z,8Z,11Z,13E)-eicosatetraenoate = 15-oxo-(5Z,8Z,11Z,13E)-eicosatetraenoate + H2O. The protein operates within steroid hormone biosynthesis. It functions in the pathway cofactor metabolism; retinol metabolism. Its pathway is lipid metabolism; arachidonate metabolism. Its activity is regulated as follows. Enzyme activity is increased by cytochrome b5. Enzyme activity is increased by liposomes containing anionic phospholipids, phosphatidic acid and cardiolipin. Inhibited by naringenin with an IC(50) of 5 uM. A cytochrome P450 monooxygenase involved in the metabolism of various endogenous substrates, including fatty acids, steroid hormones and vitamins. Mechanistically, uses molecular oxygen inserting one oxygen atom into a substrate, and reducing the second into a water molecule, with two electrons provided by NADPH via cytochrome P450 reductase (NADPH--hemoprotein reductase). Exhibits catalytic activity for the formation of hydroxyestrogens from 17beta-estradiol (E2), namely 2- and 4-hydroxy E2. Metabolizes testosterone and progesterone to B or D ring hydroxylated metabolites. May act as a major enzyme for all-trans retinoic acid biosynthesis in extrahepatic tissues. Catalyzes two successive oxidative transformation of all-trans retinol to all-trans retinal and then to the active form all-trans retinoic acid. Catalyzes the epoxidation of double bonds of certain PUFA. Converts arachidonic acid toward epoxyeicosatrienoic acid (EpETrE) regioisomers, 8,9-, 11,12-, and 14,15- EpETrE, that function as lipid mediators in the vascular system. Additionally, displays dehydratase activity toward oxygenated eicosanoids hydroperoxyeicosatetraenoates (HpETEs). This activity is independent of cytochrome P450 reductase, NADPH, and O2. Also involved in the oxidative metabolism of xenobiotics, particularly converting polycyclic aromatic hydrocarbons and heterocyclic aryl amines procarcinogens to DNA-damaging products. Plays an important role in retinal vascular development. Under ambient/hyperoxic O2 conditions, promotes angiogenesis and capillary morphogenesis of retinal endothelial cells and pericytes, likely by metabolizing the oxygenated products symptomatic of oxidative stress. Also, contributes to oxidative homeostasis and ultrastructural organization and function of trabecular meshwork tissue through modulation of POSTN expression. This chain is Cytochrome P450 1B1, found in Mus musculus (Mouse).